The primary structure comprises 303 residues: Ubiquinone biosynthesis protein COQ4, mitochondrial (303 aa).

4 residues coordinate Zn(2+): H191, D192, H195, and E207.

Belongs to the COQ4 family. As to quaternary structure, component of a multi-subunit COQ enzyme complex, composed of at least COQ3, COQ4, COQ5, COQ6, COQ7 and COQ9. Zn(2+) serves as cofactor.

The protein resides in the mitochondrion inner membrane. The enzyme catalyses a 4-hydroxy-3-methoxy-5-(all-trans-polyprenyl)benzoate + H(+) = a 2-methoxy-6-(all-trans-polyprenyl)phenol + CO2. It functions in the pathway cofactor biosynthesis; ubiquinone biosynthesis. Its function is as follows. Lyase that catalyzes the C1-decarboxylation of 4-hydroxy-3-methoxy-5-(all-trans-polyprenyl)benzoic acid into 2-methoxy-6-(all-trans-polyprenyl)phenol during ubiquinone biosynthesis. This chain is Ubiquinone biosynthesis protein COQ4, mitochondrial, found in Komagataella phaffii (strain GS115 / ATCC 20864) (Yeast).